Reading from the N-terminus, the 262-residue chain is Small ribosomal subunit protein eS4 (262 aa).

Residues 42–104 (LPLILILRNR…TNEDFRLLYD (63 aa)) enclose the S4 RNA-binding domain.

It belongs to the eukaryotic ribosomal protein eS4 family.

The protein resides in the cytoplasm. The protein is Small ribosomal subunit protein eS4 (RPS4) of Gossypium hirsutum (Upland cotton).